We begin with the raw amino-acid sequence, 878 residues long: Alanine--tRNA ligase (878 aa).

Zn(2+) contacts are provided by His566, His570, Cys668, and His672.

This sequence belongs to the class-II aminoacyl-tRNA synthetase family. It depends on Zn(2+) as a cofactor.

It is found in the cytoplasm. The catalysed reaction is tRNA(Ala) + L-alanine + ATP = L-alanyl-tRNA(Ala) + AMP + diphosphate. Its function is as follows. Catalyzes the attachment of alanine to tRNA(Ala) in a two-step reaction: alanine is first activated by ATP to form Ala-AMP and then transferred to the acceptor end of tRNA(Ala). Also edits incorrectly charged Ser-tRNA(Ala) and Gly-tRNA(Ala) via its editing domain. The sequence is that of Alanine--tRNA ligase from Geobacillus thermodenitrificans (strain NG80-2).